We begin with the raw amino-acid sequence, 92 residues long: Large ribosomal subunit protein eL42 (92 aa).

Residues cysteine 11, cysteine 14, cysteine 70, and cysteine 73 each contribute to the Zn(2+) site. A C4-type zinc finger spans residues cysteine 11–cysteine 73.

Belongs to the eukaryotic ribosomal protein eL42 family. As to quaternary structure, part of the 50S ribosomal subunit. Requires Zn(2+) as cofactor.

Its function is as follows. Binds to the 23S rRNA. The protein is Large ribosomal subunit protein eL42 of Methanothermobacter thermautotrophicus (strain ATCC 29096 / DSM 1053 / JCM 10044 / NBRC 100330 / Delta H) (Methanobacterium thermoautotrophicum).